We begin with the raw amino-acid sequence, 629 residues long: tRNA uridine 5-carboxymethylaminomethyl modification enzyme MnmG (629 aa).

13–18 (GGGHAG) is an FAD binding site. Residue 273–287 (GPRYCPSIEDKITRF) participates in NAD(+) binding.

The protein belongs to the MnmG family. As to quaternary structure, homodimer. Heterotetramer of two MnmE and two MnmG subunits. The cofactor is FAD.

It is found in the cytoplasm. Its function is as follows. NAD-binding protein involved in the addition of a carboxymethylaminomethyl (cmnm) group at the wobble position (U34) of certain tRNAs, forming tRNA-cmnm(5)s(2)U34. In Colwellia psychrerythraea (strain 34H / ATCC BAA-681) (Vibrio psychroerythus), this protein is tRNA uridine 5-carboxymethylaminomethyl modification enzyme MnmG.